Here is a 463-residue protein sequence, read N- to C-terminus: Adenosylhomocysteinase (463 aa).

Threonine 54, aspartate 129, and glutamate 189 together coordinate substrate. Residue 190–192 (TTT) coordinates NAD(+). 2 residues coordinate substrate: lysine 219 and aspartate 223. NAD(+) is bound by residues asparagine 224, 253-258 (GYGDVG), glutamate 276, asparagine 311, 332-334 (IGH), and asparagine 377.

The protein belongs to the adenosylhomocysteinase family. NAD(+) serves as cofactor.

Its subcellular location is the cytoplasm. The catalysed reaction is S-adenosyl-L-homocysteine + H2O = L-homocysteine + adenosine. Its pathway is amino-acid biosynthesis; L-homocysteine biosynthesis; L-homocysteine from S-adenosyl-L-homocysteine: step 1/1. In terms of biological role, may play a key role in the regulation of the intracellular concentration of adenosylhomocysteine. The polypeptide is Adenosylhomocysteinase (Caulobacter vibrioides (strain ATCC 19089 / CIP 103742 / CB 15) (Caulobacter crescentus)).